A 466-amino-acid polypeptide reads, in one-letter code: Adenosylhomocysteinase (466 aa).

The substrate site is built by Thr-57, Asp-132, and Glu-192. Thr-193–Thr-195 is a binding site for NAD(+). Positions 222 and 226 each coordinate substrate. NAD(+) contacts are provided by residues Asn-227, Gly-256–Gly-261, Glu-279, Asn-314, Ile-335–His-337, and Asn-380.

This sequence belongs to the adenosylhomocysteinase family. The cofactor is NAD(+).

It localises to the cytoplasm. It catalyses the reaction S-adenosyl-L-homocysteine + H2O = L-homocysteine + adenosine. Its pathway is amino-acid biosynthesis; L-homocysteine biosynthesis; L-homocysteine from S-adenosyl-L-homocysteine: step 1/1. Functionally, may play a key role in the regulation of the intracellular concentration of adenosylhomocysteine. In Rhizobium leguminosarum bv. trifolii (strain WSM2304), this protein is Adenosylhomocysteinase.